The primary structure comprises 289 residues: RNA exonuclease 4 (289 aa).

The span at 1–24 (MALSSNWQALLASESNPTSNGKNK) shows a compositional bias: polar residues. Positions 1-34 (MALSSNWQALLASESNPTSNGKNKQSNRKIRNVK) are disordered. Basic residues predominate over residues 25–34 (QSNRKIRNVK). The Exonuclease domain occupies 121–273 (YIAMDCEFVG…EDARATMLLY (153 aa)).

This sequence belongs to the REXO4 family.

It localises to the nucleus. Functionally, exoribonuclease involved in ribosome biosynthesis. Involved in the processing of ITS1, the internal transcribed spacer localized between the 18S and 5.8S rRNAs. This Saccharomyces cerevisiae (strain ATCC 204508 / S288c) (Baker's yeast) protein is RNA exonuclease 4 (REX4).